Reading from the N-terminus, the 85-residue chain is UPF0386 protein Meso_1721 (85 aa).

The protein belongs to the UPF0386 family.

The polypeptide is UPF0386 protein Meso_1721 (Chelativorans sp. (strain BNC1)).